We begin with the raw amino-acid sequence, 363 residues long: NADH-quinone oxidoreductase subunit H (363 aa).

10 helical membrane-spanning segments follow: residues 29 to 49, 62 to 82, 96 to 116, 127 to 147, 163 to 183, 202 to 222, 239 to 257, 264 to 286, 299 to 319, and 339 to 359; these read VLKILLIAVPVIVTVAFYVVW, GPMYVGMGIFQAFADVFKLLF, FIIAPLLTLAPAFAAWSVVPF, VGLLYLLAMTSLGVYGIILAG, AAQVVSYEIAMGFALVGVMIA, FFDWFLIPLFPLFIVYWVSGV, IVAGHMVEYSGGAFALFFL, ILVSFLISIFFLGGWLSPIQGWV, TGGWPWLLMKVFFFASAYIWF, and FIPLTIVWIAVTALMVFYGVI.

The protein belongs to the complex I subunit 1 family. As to quaternary structure, NDH-1 is composed of 14 different subunits. Subunits NuoA, H, J, K, L, M, N constitute the membrane sector of the complex.

The protein localises to the cell inner membrane. The catalysed reaction is a quinone + NADH + 5 H(+)(in) = a quinol + NAD(+) + 4 H(+)(out). Its function is as follows. NDH-1 shuttles electrons from NADH, via FMN and iron-sulfur (Fe-S) centers, to quinones in the respiratory chain. The immediate electron acceptor for the enzyme in this species is believed to be ubiquinone. Couples the redox reaction to proton translocation (for every two electrons transferred, four hydrogen ions are translocated across the cytoplasmic membrane), and thus conserves the redox energy in a proton gradient. This subunit may bind ubiquinone. This is NADH-quinone oxidoreductase subunit H from Xanthomonas campestris pv. campestris (strain 8004).